The following is a 159-amino-acid chain: Urease accessory protein UreE (159 aa).

It belongs to the UreE family.

The protein localises to the cytoplasm. In terms of biological role, involved in urease metallocenter assembly. Binds nickel. Probably functions as a nickel donor during metallocenter assembly. The chain is Urease accessory protein UreE from Acinetobacter baylyi (strain ATCC 33305 / BD413 / ADP1).